The following is a 137-amino-acid chain: Hydrogenase maturation factor HypA (137 aa).

Histidine 2 is a binding site for Ni(2+). Positions 73, 75, 105, and 108 each coordinate Zn(2+).

Belongs to the HypA/HybF family.

Functionally, involved in the maturation of [NiFe] hydrogenases. Required for nickel insertion into the metal center of the hydrogenase. The sequence is that of Hydrogenase maturation factor HypA from Methanosarcina mazei (strain ATCC BAA-159 / DSM 3647 / Goe1 / Go1 / JCM 11833 / OCM 88) (Methanosarcina frisia).